The primary structure comprises 501 residues: Cytochrome P450 3A6 (501 aa).

Cys440 is a binding site for heme.

It belongs to the cytochrome P450 family. Heme serves as cofactor.

Its subcellular location is the endoplasmic reticulum membrane. It is found in the microsome membrane. It catalyses the reaction an organic molecule + reduced [NADPH--hemoprotein reductase] + O2 = an alcohol + oxidized [NADPH--hemoprotein reductase] + H2O + H(+). Functionally, exhibits progesterone 6 beta-hydroxylase activity. In Oryctolagus cuniculus (Rabbit), this protein is Cytochrome P450 3A6 (CYP3A6).